A 294-amino-acid chain; its full sequence is 4-hydroxy-tetrahydrodipicolinate synthase (294 aa).

Thr47 contacts pyruvate. Residue Tyr135 is the Proton donor/acceptor of the active site. The active-site Schiff-base intermediate with substrate is the Lys164. Pyruvate is bound at residue Val206.

This sequence belongs to the DapA family. In terms of assembly, homotetramer; dimer of dimers.

It is found in the cytoplasm. It carries out the reaction L-aspartate 4-semialdehyde + pyruvate = (2S,4S)-4-hydroxy-2,3,4,5-tetrahydrodipicolinate + H2O + H(+). It functions in the pathway amino-acid biosynthesis; L-lysine biosynthesis via DAP pathway; (S)-tetrahydrodipicolinate from L-aspartate: step 3/4. Catalyzes the condensation of (S)-aspartate-beta-semialdehyde [(S)-ASA] and pyruvate to 4-hydroxy-tetrahydrodipicolinate (HTPA). This chain is 4-hydroxy-tetrahydrodipicolinate synthase, found in Lachnoclostridium phytofermentans (strain ATCC 700394 / DSM 18823 / ISDg) (Clostridium phytofermentans).